A 458-amino-acid chain; its full sequence is tRNA modification GTPase MnmE (458 aa).

3 residues coordinate (6S)-5-formyl-5,6,7,8-tetrahydrofolate: R22, E84, and R123. The TrmE-type G domain occupies 220 to 379; sequence GIATAIIGRP…LEKAIADLFF (160 aa). N230 is a K(+) binding site. GTP contacts are provided by residues 230 to 235, 249 to 255, and 274 to 277; these read NVGKSS, TDIAGTT, and DTAG. S234 serves as a coordination point for Mg(2+). T249, I251, and T254 together coordinate K(+). T255 provides a ligand contact to Mg(2+). K458 provides a ligand contact to (6S)-5-formyl-5,6,7,8-tetrahydrofolate.

This sequence belongs to the TRAFAC class TrmE-Era-EngA-EngB-Septin-like GTPase superfamily. TrmE GTPase family. As to quaternary structure, homodimer. Heterotetramer of two MnmE and two MnmG subunits. K(+) is required as a cofactor.

It localises to the cytoplasm. In terms of biological role, exhibits a very high intrinsic GTPase hydrolysis rate. Involved in the addition of a carboxymethylaminomethyl (cmnm) group at the wobble position (U34) of certain tRNAs, forming tRNA-cmnm(5)s(2)U34. The polypeptide is tRNA modification GTPase MnmE (Bacillus cytotoxicus (strain DSM 22905 / CIP 110041 / 391-98 / NVH 391-98)).